A 77-amino-acid polypeptide reads, in one-letter code: Small ribosomal subunit protein bS16 (77 aa).

Belongs to the bacterial ribosomal protein bS16 family.

The sequence is that of Small ribosomal subunit protein bS16 from Wolinella succinogenes (strain ATCC 29543 / DSM 1740 / CCUG 13145 / JCM 31913 / LMG 7466 / NCTC 11488 / FDC 602W) (Vibrio succinogenes).